The sequence spans 495 residues: Pleckstrin homology domain-containing family O member 2 (495 aa).

The 103-residue stretch at threonine 18–asparagine 120 folds into the PH domain. Residues serine 165 and serine 168 each carry the phosphoserine modification. Positions leucine 171 to lysine 411 are disordered. Residues glutamine 198 to glycine 213 show a composition bias toward pro residues. A Phosphothreonine modification is found at threonine 233. The segment covering aspartate 235–glutamate 244 has biased composition (polar residues). A phosphoserine mark is found at serine 236, serine 238, serine 239, serine 274, and serine 292. Phosphothreonine is present on threonine 296. Over residues serine 324–serine 335 the composition is skewed to low complexity. Residues glutamate 336–valine 350 show a composition bias toward polar residues. Residue serine 395 is modified to Phosphoserine. Over residues leucine 399–lysine 411 the composition is skewed to basic and acidic residues. Residues cysteine 444–leucine 469 are a coiled coil.

This Mus musculus (Mouse) protein is Pleckstrin homology domain-containing family O member 2 (Plekho2).